The following is a 491-amino-acid chain: Keratin, type I cytoskeletal 24 (491 aa).

The disordered stretch occupies residues 1–23 (MFCSAQKGSCSSRVSSSGAVGSR). The tract at residues 1-117 (MFCSAQKGSC…GYDGGLLSGS (117 aa)) is head. Residues 8–23 (GSCSSRVSSSGAVGSR) are compositionally biased toward low complexity. The interval 118-153 (EKQTMQGLNDRLANYLDKVRALEEANTDLETKIKDW) is coil 1A. In terms of domain architecture, IF rod spans 118 to 432 (EKQTMQGLND…RLLNGDGGGC (315 aa)). The interval 154 to 174 (YGRHGSGKDGPGRDYSQYCSV) is linker 1. Positions 175–266 (IEDLKNQIIS…KNHEEEMKCL (92 aa)) are coil 1B. The segment at 267–289 (QGSSGGDVTVEMNATPGTDLTKL) is linker 12. A coil 2 region spans residues 290-428 (LNDMRAQYEA…ETYRRLLNGD (139 aa)). The interval 429–491 (GGGCDYRNLV…VSNISEVKIK (63 aa)) is tail.

It belongs to the intermediate filament family. As to quaternary structure, heterotetramer of two type I and two type II keratins.

The chain is Keratin, type I cytoskeletal 24 (Krt24) from Rattus norvegicus (Rat).